Reading from the N-terminus, the 1654-residue chain is Microtubule cross-linking factor 2 (1654 aa).

Residues 1 to 188 are disordered; that stretch reads METPAGESSA…VAASSVGSSR (188 aa). Residues 55–66 are compositionally biased toward low complexity; the sequence is GSATACGTASSA. Pro residues predominate over residues 102–113; it reads GTGPRPPPPPPS. A compositionally biased stretch (low complexity) spans 132 to 147; that stretch reads LGLELALSSDAESAAG. The segment at 209-238 is required for association with Golgi apparatus membrane; sequence PGGLVRELEELRSENDYLKDEIEELRAEML. Coiled coils occupy residues 216–279, 308–349, 448–546, 816–843, and 1079–1113; these read LEEL…AERR, SMRL…LQTE, LKLV…YRSE, IKDL…ERQL, and SQEK…LQKA. The segment at 348–379 is disordered; it reads TELDRPREHSLKKRGTRSLGKTDKKPTAQEDS. Over residues 1122–1145 the composition is skewed to basic and acidic residues; it reads SDMEKQDNSWKEARSEKTHDKEGV. Residues 1122-1146 form a disordered region; sequence SDMEKQDNSWKEARSEKTHDKEGVS. Phosphoserine occurs at positions 1165 and 1251. A KR-rich domain required for microtubules binding region spans residues 1406-1505; that stretch reads LVSVRSKQIS…HSGSTESVWK (100 aa). 3 disordered regions span residues 1427-1450, 1537-1560, and 1627-1654; these read RPCC…LDST, PTTA…YHQP, and NTIR…AAPQ. The span at 1628–1638 shows a compositional bias: basic residues; the sequence is TIRHSPSKCRL.

It belongs to the MTCL family. In terms of assembly, interacts with CLASP2. Interacts with CLASP1. The C-terminal SOGA 25 kDa form occurs as a monomer. Post-translationally, proteolytically cleaved into a C-terminal SOGA 25 kDa form that is detected in plasma. Proteolytically cleaved in primary hepatocytes into a C-terminal SOGA 80 kDa form. In terms of processing, phosphorylated during mitosis in a CDK1-dependent manner. Expressed in liver (at protein level).

The protein localises to the secreted. Its subcellular location is the cytoplasm. The protein resides in the cytoskeleton. It is found in the golgi apparatus membrane. It localises to the midbody. Its function is as follows. Microtubule-associated factor that enables integration of the centrosomal and Golgi-associated microtubules on the Golgi membrane, supporting directional migration. Preferentially acts on the perinuclear microtubules accumulated around the Golgi. Associates with the Golgi membrane through the N-terminal coiled-coil region and directly binds microtubules through the C-terminal domain. Required for faithful chromosome segregation during mitosis. Regulates autophagy by playing a role in the reduction of glucose production in an adiponectin- and insulin-dependent manner. The chain is Microtubule cross-linking factor 2 (Mtcl2) from Mus musculus (Mouse).